The sequence spans 207 residues: Outer-membrane lipoprotein LolB (207 aa).

An N-terminal signal peptide occupies residues 1-26 (MSKLKIDTKRRFSLLIALVLIISLSS). Residue cysteine 27 is the site of N-palmitoyl cysteine attachment. Cysteine 27 is lipidated: S-diacylglycerol cysteine.

It belongs to the LolB family. As to quaternary structure, monomer.

The protein localises to the cell outer membrane. In terms of biological role, plays a critical role in the incorporation of lipoproteins in the outer membrane after they are released by the LolA protein. This Francisella tularensis subsp. tularensis (strain FSC 198) protein is Outer-membrane lipoprotein LolB.